A 138-amino-acid chain; its full sequence is Ribosomal RNA large subunit methyltransferase H (138 aa).

S-adenosyl-L-methionine-binding positions include Gly-86 and 105-110 (LSPLTF).

The protein belongs to the RNA methyltransferase RlmH family. In terms of assembly, homodimer.

Its subcellular location is the cytoplasm. The enzyme catalyses pseudouridine(1915) in 23S rRNA + S-adenosyl-L-methionine = N(3)-methylpseudouridine(1915) in 23S rRNA + S-adenosyl-L-homocysteine + H(+). Functionally, specifically methylates the pseudouridine at position 1915 (m3Psi1915) in 23S rRNA. The protein is Ribosomal RNA large subunit methyltransferase H of Prochlorococcus marinus (strain MIT 9215).